A 1798-amino-acid polypeptide reads, in one-letter code: DNA polymerase II large subunit (1798 aa).

A disordered region spans residues 286 to 309 (EKGKSSEENKDESKAEDTGTESVA). Positions 1184–1319 (VVGYYLAEGY…ETLLLAKFGI (136 aa)) constitute a DOD-type homing endonuclease domain. Residues 1699 to 1798 (TGHSNGKNGY…GISLDEFFGS (100 aa)) form a disordered region. Positions 1714 to 1731 (GKNGKASKKSGSLASKLS) are enriched in low complexity. Over residues 1733 to 1753 (KGKEPSKKKESAKPKRSEKVK) the composition is skewed to basic and acidic residues.

It belongs to the archaeal DNA polymerase II family. In terms of assembly, heterodimer of a large subunit and a small subunit. Post-translationally, this protein undergoes a protein self splicing that involves a post-translational excision of the intervening region (intein) followed by peptide ligation.

It catalyses the reaction DNA(n) + a 2'-deoxyribonucleoside 5'-triphosphate = DNA(n+1) + diphosphate. The catalysed reaction is Exonucleolytic cleavage in the 3'- to 5'-direction to yield nucleoside 5'-phosphates.. In terms of biological role, possesses two activities: a DNA synthesis (polymerase) and an exonucleolytic activity that degrades single-stranded DNA in the 3'- to 5'-direction. Has a template-primer preference which is characteristic of a replicative DNA polymerase. The sequence is that of DNA polymerase II large subunit (polC) from Thermococcus kodakarensis (strain ATCC BAA-918 / JCM 12380 / KOD1) (Pyrococcus kodakaraensis (strain KOD1)).